Here is a 204-residue protein sequence, read N- to C-terminus: Ribonuclease HII (204 aa).

The region spanning 16 to 204 (ESIAGCDEVG…RRSFLKKILK (189 aa)) is the RNase H type-2 domain. A divalent metal cation-binding residues include aspartate 22, glutamate 23, and aspartate 120.

It belongs to the RNase HII family. The cofactor is Mn(2+). Mg(2+) serves as cofactor.

The protein localises to the cytoplasm. It carries out the reaction Endonucleolytic cleavage to 5'-phosphomonoester.. Functionally, endonuclease that specifically degrades the RNA of RNA-DNA hybrids. In Alkaliphilus metalliredigens (strain QYMF), this protein is Ribonuclease HII.